The primary structure comprises 242 residues: Endoglucanase-5 (242 aa).

Positions 1–17 are cleaved as a signal peptide; that stretch reads MKATLVLGSLIVGAVSA. Residues 18–182 are catalytic; the sequence is YKATTTRYYD…ETDPTPVLGN (165 aa). Catalysis depends on Asp-27, which acts as the Nucleophile. The active-site Proton donor is Asp-134. A disordered region spans residues 177-206; that stretch reads TPVLGNDTGSTPPGSSPPATSSSPPSGGGQ. An N-linked (GlcNAc...) asparagine glycan is attached at Asn-182. The span at 184–201 shows a compositional bias: low complexity; it reads TGSTPPGSSPPATSSSPP. The CBM1 domain occupies 205 to 241; that stretch reads GQQTLYGQCGGAGWTGPTTCQAPGTCKVQNQWYSQCL. Intrachain disulfides connect Cys-213–Cys-230 and Cys-224–Cys-240.

Belongs to the glycosyl hydrolase 45 (cellulase K) family.

The catalysed reaction is Endohydrolysis of (1-&gt;4)-beta-D-glucosidic linkages in cellulose, lichenin and cereal beta-D-glucans.. The polypeptide is Endoglucanase-5 (egl5) (Hypocrea jecorina (Trichoderma reesei)).